Reading from the N-terminus, the 307-residue chain is tRNA dimethylallyltransferase 2 (307 aa).

9–16 (GPTAVGKT) is a binding site for ATP. Residue 11-16 (TAVGKT) coordinates substrate. The tract at residues 34–37 (DSRQ) is interaction with substrate tRNA.

This sequence belongs to the IPP transferase family. Monomer. Mg(2+) serves as cofactor.

It catalyses the reaction adenosine(37) in tRNA + dimethylallyl diphosphate = N(6)-dimethylallyladenosine(37) in tRNA + diphosphate. In terms of biological role, catalyzes the transfer of a dimethylallyl group onto the adenine at position 37 in tRNAs that read codons beginning with uridine, leading to the formation of N6-(dimethylallyl)adenosine (i(6)A). The chain is tRNA dimethylallyltransferase 2 from Azobacteroides pseudotrichonymphae genomovar. CFP2.